The sequence spans 573 residues: PCNA-interacting partner (573 aa).

Disordered stretches follow at residues 470–505 (VGKA…SKGK) and 531–560 (PKVP…RGKL).

It belongs to the PARI family. Interacts with RAD51 and PCNA. Interacts with PARP1. Interacts with TASOR. Expressed in the ovary, Sertoli cells of the testis and in granular cells within the cerebellum.

The protein resides in the cytoplasm. The protein localises to the nucleus. Its function is as follows. Required to suppress inappropriate homologous recombination, thereby playing a central role DNA repair and in the maintenance of genomic stability. Antagonizes homologous recombination by interfering with the formation of the RAD51-DNA homologous recombination structure. Binds single-strand DNA and poly(A) homopolymers. Positively regulate the poly(ADP-ribosyl)ation activity of PARP1; however such function may be indirect. This chain is PCNA-interacting partner (Parpbp), found in Mus musculus (Mouse).